A 276-amino-acid polypeptide reads, in one-letter code: Large ribosomal subunit protein uL2 (276 aa).

The segment at 224 to 276 (VAMNPVDHPHGGGEGKTGEGRVPVSPWGTPTKGYRTRRNKRTTSMIVQRRQKR) is disordered. The span at 230-242 (DHPHGGGEGKTGE) shows a compositional bias: basic and acidic residues.

This sequence belongs to the universal ribosomal protein uL2 family. In terms of assembly, part of the 50S ribosomal subunit. Forms a bridge to the 30S subunit in the 70S ribosome.

Functionally, one of the primary rRNA binding proteins. Required for association of the 30S and 50S subunits to form the 70S ribosome, for tRNA binding and peptide bond formation. It has been suggested to have peptidyltransferase activity; this is somewhat controversial. Makes several contacts with the 16S rRNA in the 70S ribosome. The sequence is that of Large ribosomal subunit protein uL2 from Polynucleobacter asymbioticus (strain DSM 18221 / CIP 109841 / QLW-P1DMWA-1) (Polynucleobacter necessarius subsp. asymbioticus).